A 580-amino-acid chain; its full sequence is High affinity choline transporter 1 (580 aa).

Over Met1–Glu6 the chain is Extracellular. The chain crosses the membrane as a helical span at residues Gly7 to Trp27. At Lys28 to Asp48 the chain is on the cytoplasmic side. Residues Ile49–Asn69 form a helical membrane-spanning segment. The Extracellular portion of the chain corresponds to Gly70–Gly81. A helical transmembrane segment spans residues Leu82–Phe102. The Cytoplasmic segment spans residues Ala103–Arg125. The chain crosses the membrane as a helical span at residues Met126–Phe146. Residues Ser147–Ser164 lie on the Extracellular side of the membrane. Residues Val165–Ala185 traverse the membrane as a helical segment. Residues Tyr186–Gln191 are Cytoplasmic-facing. The chain crosses the membrane as a helical span at residues Leu192–Val212. The Extracellular segment spans residues Thr213–Val237. Residues Tyr238–Phe258 traverse the membrane as a helical segment. Residues Gln259 to Ser274 lie on the Cytoplasmic side of the membrane. The helical transmembrane segment at Phe275–Gly295 threads the bilayer. Topologically, residues Ala296–Asp317 are extracellular. The N-linked (GlcNAc...) asparagine glycan is linked to Asn301. The chain crosses the membrane as a helical span at residues Met318 to Gly338. The Cytoplasmic portion of the chain corresponds to Ala339–Glu376. The helical transmembrane segment at Ile377–Leu397 threads the bilayer. Residues Leu398–Trp406 lie on the Extracellular side of the membrane. The chain crosses the membrane as a helical span at residues Tyr407–Ile427. Residues Lys428 to Ala435 lie on the Cytoplasmic side of the membrane. A helical transmembrane segment spans residues Val436 to Leu456. The Extracellular segment spans residues Gln457–Thr481. A helical transmembrane segment spans residues Leu482–Phe502. The interval Phe502–Gln580 is mediates interaction with SEC14L1. Residues Glu503–Gln580 lie on the Cytoplasmic side of the membrane. The Dileucine-like motif motif lies at Asp527–Val532.

It belongs to the sodium:solute symporter (SSF) (TC 2.A.21) family. In terms of assembly, homooligomerizes at cell surface. Interacts with SEC14L1; may regulate SLC5A7. In terms of processing, phosphorylated by PKC and dephosphorylated by PP1/PP2A. As to expression, found in spinal cord, brain-stem, mid-brain and striatum. Specific for cholinergic neurons.

It localises to the presynaptic cell membrane. The protein resides in the cell projection. Its subcellular location is the axon. It is found in the early endosome membrane. The protein localises to the cytoplasmic vesicle. It localises to the secretory vesicle. The protein resides in the synaptic vesicle membrane. It carries out the reaction choline(out) + n Na(+)(out) = choline(in) + n Na(+)(in). Choline uptake activity is regulated by SLC5A7/CHT1 internalization (inactive form) from the cell surface and recycling of internalized SLC5A7/CHT1 into the cell surface (active form). Activated by extracellular chloride ion. Specifically inhibited by nanomolar concentrations of hemicholinium 3. Its function is as follows. High-affinity Na(+)-coupled choline transmembrane symporter. Functions as an electrogenic, voltage-dependent transporter with variable charge/choline stoichiometry. Choline uptake and choline-induced current is also Cl(-)-dependent where Cl(-) is likely a regulatory ion rather than cotransported ion. Plays a critical role in acetylcholine (ACh) synthesis by taking up the substrate choline from the synaptic cleft into the presynaptic nerve terminals after neurotransmitter release. SLC5A7/CHT1-mediated choline high-affinity transport in cholinergic neurons is the rate-limiting step for production of ACh, thereby facilitating communication by subsequent action potentials. Localized predominantly in presynaptic terminal intracellular organelles, and translocated to the plasma membrane in active form in response to neuronal activity. This is High affinity choline transporter 1 from Mus musculus (Mouse).